A 171-amino-acid polypeptide reads, in one-letter code: MLQEPINLPKWLEENQHLLKPPVNNFCIQRGGYTVMIVGGPNARTDYHINQTPEWFHQKKGHMTLKVVDDGEFRDITINEGDIFLLPANVPHNPVRYADTIGVVVEQDRPEGMKDALRWYCPNEKCREIVFENSFQLVDLGTQIKEAILDFDGDIEKRTCKACGTVATSRP.

An O2-binding site is contributed by arginine 44. Residues histidine 48, glutamate 54, and histidine 92 each contribute to the Fe cation site. Glutamate 54 is a binding site for substrate. Substrate contacts are provided by arginine 96 and glutamate 106. A divalent metal cation-binding residues include cysteine 121, cysteine 126, cysteine 160, and cysteine 163.

It belongs to the 3-HAO family. Fe(2+) is required as a cofactor.

It localises to the cytoplasm. It catalyses the reaction 3-hydroxyanthranilate + O2 = (2Z,4Z)-2-amino-3-carboxymuconate 6-semialdehyde. It functions in the pathway cofactor biosynthesis; NAD(+) biosynthesis; quinolinate from L-kynurenine: step 3/3. Catalyzes the oxidative ring opening of 3-hydroxyanthranilate to 2-amino-3-carboxymuconate semialdehyde, which spontaneously cyclizes to quinolinate. The chain is 3-hydroxyanthranilate 3,4-dioxygenase from Yarrowia lipolytica (strain CLIB 122 / E 150) (Yeast).